The chain runs to 293 residues: Large ribosomal subunit protein uL2c (293 aa).

A disordered region spans residues 224-245 (VMNPVDHPHGGGEGKSPIGRAR).

This sequence belongs to the universal ribosomal protein uL2 family. In terms of assembly, part of the 50S ribosomal subunit.

It localises to the plastid. The protein resides in the chloroplast. The sequence is that of Large ribosomal subunit protein uL2c (rpl2) from Pyropia yezoensis (Susabi-nori).